Consider the following 631-residue polypeptide: RNA polymerase sigma factor RpoD (631 aa).

The tract at residues 395 to 465 (LIKANLRLVV…TRSISDQART (71 aa)) is sigma-70 factor domain-2. An Interaction with polymerase core subunit RpoC motif is present at residues 419–422 (DLVQ). The sigma-70 factor domain-3 stretch occupies residues 474–550 (EQINRLNRET…DKAIKNPANH (77 aa)). The sigma-70 factor domain-4 stretch occupies residues 563–616 (ILGTLPEREQEVVKMRFGLEDGYSLTLEEVGLHFNVTRERIRQIESKALRRLKN). A DNA-binding region (H-T-H motif) is located at residues 589–608 (LEEVGLHFNVTRERIRQIES).

The protein belongs to the sigma-70 factor family. RpoD/SigA subfamily. In terms of assembly, interacts transiently with the RNA polymerase catalytic core.

The protein localises to the cytoplasm. Functionally, sigma factors are initiation factors that promote the attachment of RNA polymerase to specific initiation sites and are then released. This sigma factor is the primary sigma factor during exponential growth. The chain is RNA polymerase sigma factor RpoD from Borreliella burgdorferi (strain ATCC 35210 / DSM 4680 / CIP 102532 / B31) (Borrelia burgdorferi).